The sequence spans 403 residues: Fasciclin-like arabinogalactan protein 2 (403 aa).

The first 26 residues, 1 to 26 (MAYLRRAATALVLIFQLHLFLSLSNA), serve as a signal peptide directing secretion. FAS1 domains lie at 27–174 (HNIT…SQVL) and 187–326 (SDLI…DKVL). N-linked (GlcNAc...) asparagine glycans are attached at residues N28, N130, N164, and N248. The interval 338-371 (SAPAPKSSKKKPKNAEADADGPSADAPSDDDVEV) is disordered. Residue A378 is the site of GPI-anchor amidated alanine attachment. Positions 379 to 403 (VSAMITRTSNVVTAIVGLCFGVWLM) are cleaved as a propeptide — removed in mature form.

This sequence belongs to the fasciclin-like AGP family. As to expression, expressed mainly in flowers and to a lesser extent in leaves and roots.

It is found in the cell membrane. May be a cell surface adhesion protein. The sequence is that of Fasciclin-like arabinogalactan protein 2 (FLA2) from Arabidopsis thaliana (Mouse-ear cress).